We begin with the raw amino-acid sequence, 142 residues long: MKTYLAKPNEVPKKWYVIDATGKPLGRLAAKIAVILRGKHKPQFTPNVDTGDYVIVVNAEKVVLTGKKLDKDGYRYHTKYPGGLKFIPYRRLLEKHPEKAIEIAVRGMLPKNRLRDRFMRKLKVYRGPNHPHAAQKPEVLEI.

The protein belongs to the universal ribosomal protein uL13 family. As to quaternary structure, part of the 50S ribosomal subunit.

This protein is one of the early assembly proteins of the 50S ribosomal subunit, although it is not seen to bind rRNA by itself. It is important during the early stages of 50S assembly. The chain is Large ribosomal subunit protein uL13 from Caldicellulosiruptor saccharolyticus (strain ATCC 43494 / DSM 8903 / Tp8T 6331).